Reading from the N-terminus, the 143-residue chain is Flagellar assembly factor FliW (143 aa).

Belongs to the FliW family. Interacts with translational regulator CsrA and flagellin(s).

It is found in the cytoplasm. Its function is as follows. Acts as an anti-CsrA protein, binds CsrA and prevents it from repressing translation of its target genes, one of which is flagellin. Binds to flagellin and participates in the assembly of the flagellum. In Clostridium novyi (strain NT), this protein is Flagellar assembly factor FliW.